The primary structure comprises 801 residues: Transducin beta-like protein 3 (801 aa).

Residue Ala2 is modified to N-acetylalanine. 13 WD repeats span residues 64-105 (EDQE…RLWK), 107-146 (IHTA…GTHH), 149-190 (GSPG…CLAV), 193-232 (AHYS…TTRT), 245-284 (LPEQ…CVYT), 290-329 (GLRQ…LQKQ), 332-372 (GYSE…CQIL), 374-413 (GHTD…QVAC), 419-459 (GHTH…LAKS), 477-516 (CHDK…LLGV), 519-560 (GHRR…KTFE), 562-602 (HDAS…RTLD), and 604-642 (HEDK…EQAE). Position 257 is a phosphoserine (Ser257). Residue Lys407 forms a Glycyl lysine isopeptide (Lys-Gly) (interchain with G-Cter in SUMO2) linkage.

Part of the small subunit (SSU) processome, composed of more than 70 proteins and the RNA chaperone small nucleolar RNA (snoRNA) U3.

It is found in the nucleus. Its subcellular location is the nucleolus. In terms of biological role, part of the small subunit (SSU) processome, first precursor of the small eukaryotic ribosomal subunit. During the assembly of the SSU processome in the nucleolus, many ribosome biogenesis factors, an RNA chaperone and ribosomal proteins associate with the nascent pre-rRNA and work in concert to generate RNA folding, modifications, rearrangements and cleavage as well as targeted degradation of pre-ribosomal RNA by the RNA exosome. The chain is Transducin beta-like protein 3 (Tbl3) from Mus musculus (Mouse).